The chain runs to 498 residues: ATP synthase subunit beta, chloroplastic (498 aa).

A Phosphothreonine modification is found at threonine 6. Serine 13 carries the phosphoserine modification. 172-179 contacts ATP; that stretch reads GGAGVGKT.

This sequence belongs to the ATPase alpha/beta chains family. F-type ATPases have 2 components, CF(1) - the catalytic core - and CF(0) - the membrane proton channel. CF(1) has five subunits: alpha(3), beta(3), gamma(1), delta(1), epsilon(1). CF(0) has four main subunits: a(1), b(1), b'(1) and c(9-12).

It localises to the plastid. The protein localises to the chloroplast thylakoid membrane. It catalyses the reaction ATP + H2O + 4 H(+)(in) = ADP + phosphate + 5 H(+)(out). Its function is as follows. Produces ATP from ADP in the presence of a proton gradient across the membrane. The catalytic sites are hosted primarily by the beta subunits. This is ATP synthase subunit beta, chloroplastic from Raphanus sativus (Radish).